A 79-amino-acid chain; its full sequence is Conotoxin TxMEKL-021 (79 aa).

The N-terminal stretch at 1-19 (MEKLTILLLVAVVLMSTQA) is a signal peptide. Positions 20–47 (LPQGGGEKRPRENIRFLSKRKSNAERWR) are excised as a propeptide. 3 disulfide bridges follow: Cys51–Cys65, Cys58–Cys69, and Cys64–Cys75.

Belongs to the conotoxin O2 superfamily. Expressed by the venom duct.

It is found in the secreted. This chain is Conotoxin TxMEKL-021, found in Conus textile (Cloth-of-gold cone).